Consider the following 343-residue polypeptide: Phosphoribosylformylglycinamidine cyclo-ligase (343 aa).

The protein belongs to the AIR synthase family.

The protein localises to the cytoplasm. It catalyses the reaction 2-formamido-N(1)-(5-O-phospho-beta-D-ribosyl)acetamidine + ATP = 5-amino-1-(5-phospho-beta-D-ribosyl)imidazole + ADP + phosphate + H(+). It functions in the pathway purine metabolism; IMP biosynthesis via de novo pathway; 5-amino-1-(5-phospho-D-ribosyl)imidazole from N(2)-formyl-N(1)-(5-phospho-D-ribosyl)glycinamide: step 2/2. The chain is Phosphoribosylformylglycinamidine cyclo-ligase from Rippkaea orientalis (strain PCC 8801 / RF-1) (Cyanothece sp. (strain PCC 8801)).